We begin with the raw amino-acid sequence, 526 residues long: MFDSNHEQELSKRRTFAIISHPDAGKTTITEKMLFFGKVIRVPGTIKGRGSGKYAKSDWMNIEKERGISITTSVMQFTYKNILMNLLDTPGHQDFSEDTYRILTAVDCCLVVIDAAKGIEERTRKLMDVARIHNTPIITFINKLDRDSRDPIEILDEIEKELKLHCIPISWPISCGKNFQGVYHIYDKIIHLYKSKFRKNFLTLDSFLDGSLNEYLGADLSIHIRQELELIMNVYSKFNKEKFLKGITTPIFFGSALGNFGIDHLLDSLIKWAPSPLYRQSNKRIIKPQERKFTGFIFKIQANMDLKHRDRIAFMRIVSGQYTKGMKLTHVRIKKNIIISDAFSFLAGERISINKAYPGDVIGLHNHGTIKIGDTFTQGEEIKFIGIPSFAPEIFRLIYLKNPLKQKQLKKGLVQLSEEGTVQVFRPILNNDLILGAIGILQFDVVIERLRIEYNIDAVYKKVNIVLARWINCGNHHSLYNLKKSYSSYLAYDISNSLIYLAPSSANLNIVMSQNSDISFNATREQ.

Residues 11 to 277 (SKRRTFAIIS…SLIKWAPSPL (267 aa)) form the tr-type G domain. Residues 20–27 (SHPDAGKT), 88–92 (DTPGH), and 142–145 (NKLD) each bind GTP.

It belongs to the TRAFAC class translation factor GTPase superfamily. Classic translation factor GTPase family. PrfC subfamily.

It is found in the cytoplasm. Its function is as follows. Increases the formation of ribosomal termination complexes and stimulates activities of RF-1 and RF-2. It binds guanine nucleotides and has strong preference for UGA stop codons. It may interact directly with the ribosome. The stimulation of RF-1 and RF-2 is significantly reduced by GTP and GDP, but not by GMP. This Buchnera aphidicola subsp. Acyrthosiphon pisum (strain 5A) protein is Peptide chain release factor 3.